The sequence spans 81 residues: Three-finger toxin MALT0051C (81 aa).

The N-terminal stretch at M1–T21 is a signal peptide. Cystine bridges form between C24–C43, C38–C60, C62–C73, and C74–C79.

This sequence belongs to the three-finger toxin family. Short-chain subfamily. Type I alpha-neurotoxin sub-subfamily. As to expression, expressed by the venom gland.

It is found in the secreted. Binds to muscle nicotinic acetylcholine receptor (nAChR) and inhibit acetylcholine from binding to the receptor, thereby impairing neuromuscular transmission. The protein is Three-finger toxin MALT0051C of Micrurus altirostris (Uruguayan coral snake).